Reading from the N-terminus, the 386-residue chain is Branched-chain-amino-acid aminotransferase, cytosolic (386 aa).

Position 1 is an N-acetylmethionine (M1). The residue at position 222 (K222) is an N6-(pyridoxal phosphate)lysine.

This sequence belongs to the class-IV pyridoxal-phosphate-dependent aminotransferase family. In terms of assembly, homodimer. Requires pyridoxal 5'-phosphate as cofactor. In terms of tissue distribution, expressed in brain and kidney. Overexpressed in MYC-induced brain tumors, lymphomas, as well as in a teratocarcinoma cell line.

Its subcellular location is the cytoplasm. It carries out the reaction L-leucine + 2-oxoglutarate = 4-methyl-2-oxopentanoate + L-glutamate. The catalysed reaction is L-isoleucine + 2-oxoglutarate = (S)-3-methyl-2-oxopentanoate + L-glutamate. The enzyme catalyses L-valine + 2-oxoglutarate = 3-methyl-2-oxobutanoate + L-glutamate. In terms of biological role, catalyzes the first reaction in the catabolism of the essential branched chain amino acids leucine, isoleucine, and valine. The chain is Branched-chain-amino-acid aminotransferase, cytosolic (Bcat1) from Mus musculus (Mouse).